The chain runs to 144 residues: MEKFLDINEIKKIIPHRYPFLLVDKITELEEGKSAVGYKNVTANEYFFNGHFPEEPVMPGVLIIEALAQVGAVAILSKEEFKGKIAYFGGINKAKFRKKVVPGDVLKLSIDLTKIKGVAGVGKAVATVDGKVAAEAELLFVVGK.

Histidine 51 is an active-site residue.

This sequence belongs to the thioester dehydratase family. FabZ subfamily.

It is found in the cytoplasm. It carries out the reaction a (3R)-hydroxyacyl-[ACP] = a (2E)-enoyl-[ACP] + H2O. In terms of biological role, involved in unsaturated fatty acids biosynthesis. Catalyzes the dehydration of short chain beta-hydroxyacyl-ACPs and long chain saturated and unsaturated beta-hydroxyacyl-ACPs. The sequence is that of 3-hydroxyacyl-[acyl-carrier-protein] dehydratase FabZ from Clostridium botulinum (strain Langeland / NCTC 10281 / Type F).